Here is a 223-residue protein sequence, read N- to C-terminus: MIF4G domain-containing protein A (223 aa).

One can recognise an MIF4G domain in the interval 7 to 206; it reads QEDYKMQAFD…LEMIEYRAAG (200 aa).

It belongs to the MIF4GD family. In terms of assembly, interacts with eif4g1, eif4g2 and slbp; probably tethered by SLBP to the 3'-end of mRNAs ending with the histone stem-loop, it also interacts with eif4g1 which is bound to their 5'-end.

The protein resides in the cytoplasm. Its subcellular location is the nucleus. Functionally, functions in replication-dependent translation of histone mRNAs which differ from other eukaryotic mRNAs in that they do not end with a poly-A tail but a stem-loop. May participate in circularizing those mRNAs specifically enhancing their translation. The sequence is that of MIF4G domain-containing protein A (mif4gd-a) from Xenopus laevis (African clawed frog).